The sequence spans 57 residues: Defensin-like protein 302 (57 aa).

3 disulfide bridges follow: Cys-19–Cys-39, Cys-26–Cys-44, and Cys-32–Cys-46.

Belongs to the DEFL family.

The protein is Defensin-like protein 302 of Arabidopsis thaliana (Mouse-ear cress).